The chain runs to 261 residues: Probable trans-aconitate 2-methyltransferase (261 aa).

Belongs to the methyltransferase superfamily. Tam family.

The protein resides in the cytoplasm. The catalysed reaction is trans-aconitate + S-adenosyl-L-methionine = (E)-3-(methoxycarbonyl)pent-2-enedioate + S-adenosyl-L-homocysteine. Functionally, catalyzes the S-adenosylmethionine monomethyl esterification of trans-aconitate. In Mycobacterium bovis (strain ATCC BAA-935 / AF2122/97), this protein is Probable trans-aconitate 2-methyltransferase.